The primary structure comprises 131 residues: Large ribosomal subunit protein eL32 (131 aa).

This sequence belongs to the eukaryotic ribosomal protein eL32 family. As to quaternary structure, component of the large ribosomal subunit. Mature ribosomes consist of a small (40S) and a large (60S) subunit. The 40S subunit contains about 32 different proteins and 1 molecule of RNA (18S). The 60S subunit contains 45 different proteins and 3 molecules of RNA (25S, 5.8S and 5S).

The protein resides in the cytoplasm. Component of the ribosome, a large ribonucleoprotein complex responsible for the synthesis of proteins in the cell. The small ribosomal subunit (SSU) binds messenger RNAs (mRNAs) and translates the encoded message by selecting cognate aminoacyl-transfer RNA (tRNA) molecules. The large subunit (LSU) contains the ribosomal catalytic site termed the peptidyl transferase center (PTC), which catalyzes the formation of peptide bonds, thereby polymerizing the amino acids delivered by tRNAs into a polypeptide chain. The nascent polypeptides leave the ribosome through a tunnel in the LSU and interact with protein factors that function in enzymatic processing, targeting, and the membrane insertion of nascent chains at the exit of the ribosomal tunnel. The protein is Large ribosomal subunit protein eL32 of Candida albicans (strain SC5314 / ATCC MYA-2876) (Yeast).